The following is a 360-amino-acid chain: 8-hydroxygeraniol dehydrogenase (360 aa).

Residues Cys50, His72, Cys103, Cys106, Cys109, Cys117, and Cys166 each contribute to the Zn(2+) site.

Belongs to the zinc-containing alcohol dehydrogenase family. Zn(2+) serves as cofactor. In terms of tissue distribution, present in seedlings and vascular tissues (at protein level). Restricted to the epidermis.

The catalysed reaction is (6E)-8-hydroxygeraniol + 2 NADP(+) = (6E)-8-oxogeranial + 2 NADPH + 2 H(+). Its function is as follows. Dehydrogenase involved in the biosynthesis of oxogeranial from hydroxygeraniol, a precursor of the terpenoid indole alkaloids such as vinblastine and vincristine. This chain is 8-hydroxygeraniol dehydrogenase (10HGO), found in Catharanthus roseus (Madagascar periwinkle).